Consider the following 569-residue polypeptide: Peroxynitrite isomerase THAP4 (569 aa).

The THAP-type zinc finger occupies 1 to 85 (MVICCAAVNC…LKPTAVPSIF (85 aa)). The tract at residues 83–219 (SIFHLSEKKR…GISMDDFTPP (137 aa)) is disordered. Positions 121–130 (IGSSLSSSDN) are enriched in polar residues. Ser-159 carries the phosphoserine modification. Residues 196–210 (ASSSAADAGGADKSG) show a composition bias toward low complexity. The HCFC1-binding motif (HBM) motif lies at 230-233 (LHSY). Residue Ser-234 is modified to Phosphoserine. The segment at 235–312 (FSSKHTRERP…EAVQSEHSDA (78 aa)) is disordered. Over residues 242 to 262 (ERPSVPREPMDRKRLKRDIEP) the composition is skewed to basic and acidic residues. Polar residues predominate over residues 265–279 (SGNSVAQSPPSSSLT). The segment covering 280–289 (ATPQKASQSP) has biased composition (low complexity). The segment at 407 to 569 (PPKLNPVVEP…LHITYKKVTP (163 aa)) is nitrobindin. Heme b-binding residues include Thr-436 and His-559.

In the C-terminal section; belongs to the nitrobindin family. In terms of assembly, homodimer. Heme b is required as a cofactor.

The protein resides in the cytoplasm. The protein localises to the nucleus. It carries out the reaction peroxynitrite = nitrate. Its pathway is nitrogen metabolism. Functionally, heme-binding protein able to scavenge peroxynitrite and to protect free L-tyrosine against peroxynitrite-mediated nitration, by acting as a peroxynitrite isomerase that converts peroxynitrite to nitrate. Therefore, this protein likely plays a role in peroxynitrite sensing and in the detoxification of reactive nitrogen and oxygen species (RNS and ROS, respectively). Is able to bind nitric oxide (NO) in vitro, but may act as a sensor of peroxynitrite levels in vivo, possibly modulating the transcriptional activity residing in the N-terminal region. The chain is Peroxynitrite isomerase THAP4 from Rattus norvegicus (Rat).